The following is a 396-amino-acid chain: Tryptophan synthase beta chain (396 aa).

N6-(pyridoxal phosphate)lysine is present on Lys86.

This sequence belongs to the TrpB family. As to quaternary structure, tetramer of two alpha and two beta chains. The cofactor is pyridoxal 5'-phosphate.

It carries out the reaction (1S,2R)-1-C-(indol-3-yl)glycerol 3-phosphate + L-serine = D-glyceraldehyde 3-phosphate + L-tryptophan + H2O. It participates in amino-acid biosynthesis; L-tryptophan biosynthesis; L-tryptophan from chorismate: step 5/5. The beta subunit is responsible for the synthesis of L-tryptophan from indole and L-serine. This is Tryptophan synthase beta chain from Aliivibrio fischeri (strain MJ11) (Vibrio fischeri).